The sequence spans 305 residues: NAD kinase 2 (305 aa).

Catalysis depends on aspartate 78, which acts as the Proton acceptor. NAD(+) contacts are provided by residues 78–79 (DG), 152–153 (NE), aspartate 182, 193–198 (TAYSLS), and asparagine 251.

This sequence belongs to the NAD kinase family. Requires a divalent metal cation as cofactor.

Its subcellular location is the cytoplasm. It carries out the reaction NAD(+) + ATP = ADP + NADP(+) + H(+). Involved in the regulation of the intracellular balance of NAD and NADP, and is a key enzyme in the biosynthesis of NADP. Catalyzes specifically the phosphorylation on 2'-hydroxyl of the adenosine moiety of NAD to yield NADP. This chain is NAD kinase 2, found in Trichormus variabilis (strain ATCC 29413 / PCC 7937) (Anabaena variabilis).